A 555-amino-acid chain; its full sequence is CTP synthase (555 aa).

Residues 1–267 (MTKFVFVTGG…AQQVLKFMHL (267 aa)) form an amidoligase domain region. Ser13 is a CTP binding site. Position 13 (Ser13) interacts with UTP. ATP-binding positions include 14–19 (SIGKGI) and Asp71. Positions 71 and 141 each coordinate Mg(2+). CTP contacts are provided by residues 148 to 150 (DIE), 188 to 193 (KTKPTQ), and Lys224. UTP contacts are provided by residues 188-193 (KTKPTQ) and Lys224. ATP is bound at residue Ala242. The region spanning 299–535 (YVQLSDAYLS…VGACLADNGN (237 aa)) is the Glutamine amidotransferase type-1 domain. Gly354 provides a ligand contact to L-glutamine. Catalysis depends on Cys381, which acts as the Nucleophile; for glutamine hydrolysis. L-glutamine is bound by residues 382–385 (LGMQ), Glu405, and Arg463. Residues His508 and Glu510 contribute to the active site. The interval 536-555 (NANHHDSTPAEPLVSEPLSS) is disordered.

It belongs to the CTP synthase family. In terms of assembly, homotetramer.

It carries out the reaction UTP + L-glutamine + ATP + H2O = CTP + L-glutamate + ADP + phosphate + 2 H(+). The enzyme catalyses L-glutamine + H2O = L-glutamate + NH4(+). The catalysed reaction is UTP + NH4(+) + ATP = CTP + ADP + phosphate + 2 H(+). The protein operates within pyrimidine metabolism; CTP biosynthesis via de novo pathway; CTP from UDP: step 2/2. Allosterically activated by GTP, when glutamine is the substrate; GTP has no effect on the reaction when ammonia is the substrate. The allosteric effector GTP functions by stabilizing the protein conformation that binds the tetrahedral intermediate(s) formed during glutamine hydrolysis. Inhibited by the product CTP, via allosteric rather than competitive inhibition. Functionally, catalyzes the ATP-dependent amination of UTP to CTP with either L-glutamine or ammonia as the source of nitrogen. Regulates intracellular CTP levels through interactions with the four ribonucleotide triphosphates. The protein is CTP synthase of Acaryochloris marina (strain MBIC 11017).